The chain runs to 109 residues: Protein reprimo (109 aa).

Asparagine 7 and asparagine 18 each carry an N-linked (GlcNAc...) asparagine glycan. The helical transmembrane segment at valine 56–leucine 76 threads the bilayer. A Phosphoserine modification is found at serine 98.

This sequence belongs to the reprimo family.

The protein localises to the cytoplasm. It localises to the membrane. Its function is as follows. May be involved in the regulation of p53-dependent G2 arrest of the cell cycle. Seems to induce cell cycle arrest by inhibiting CDK1 activity and nuclear translocation of the CDC2 cyclin B1 complex. The chain is Protein reprimo (Rprm) from Mus musculus (Mouse).